A 454-amino-acid polypeptide reads, in one-letter code: UDP-glycosyltransferase 79A2 (454 aa).

Residues Ser-269, 330 to 331, 348 to 356, and 370 to 373 contribute to the UDP-alpha-D-glucose site; these read WV, HAGYGSVIE, and KVDQ.

The protein belongs to the UDP-glycosyltransferase family.

May glycosylate diterpenes or flavonols in leaves. The sequence is that of UDP-glycosyltransferase 79A2 from Stevia rebaudiana (Stevia).